The chain runs to 355 residues: Probable dual-specificity RNA methyltransferase RlmN (355 aa).

The active-site Proton acceptor is Glu107. Positions 113–341 (TDKRLTVCVS…VSVRYSRGLE (229 aa)) constitute a Radical SAM core domain. Cys120 and Cys346 form a disulfide bridge. [4Fe-4S] cluster is bound by residues Cys127, Cys131, and Cys134. Residues 174 to 175 (GE), Ser204, 227 to 229 (SLH), and Asn303 contribute to the S-adenosyl-L-methionine site. Cys346 functions as the S-methylcysteine intermediate in the catalytic mechanism.

Belongs to the radical SAM superfamily. RlmN family. Requires [4Fe-4S] cluster as cofactor.

It localises to the cytoplasm. The catalysed reaction is adenosine(2503) in 23S rRNA + 2 reduced [2Fe-2S]-[ferredoxin] + 2 S-adenosyl-L-methionine = 2-methyladenosine(2503) in 23S rRNA + 5'-deoxyadenosine + L-methionine + 2 oxidized [2Fe-2S]-[ferredoxin] + S-adenosyl-L-homocysteine. It carries out the reaction adenosine(37) in tRNA + 2 reduced [2Fe-2S]-[ferredoxin] + 2 S-adenosyl-L-methionine = 2-methyladenosine(37) in tRNA + 5'-deoxyadenosine + L-methionine + 2 oxidized [2Fe-2S]-[ferredoxin] + S-adenosyl-L-homocysteine. Functionally, specifically methylates position 2 of adenine 2503 in 23S rRNA and position 2 of adenine 37 in tRNAs. This is Probable dual-specificity RNA methyltransferase RlmN from Trichormus variabilis (strain ATCC 29413 / PCC 7937) (Anabaena variabilis).